The chain runs to 468 residues: Chitoporin (468 aa).

The first 32 residues, 1-32 (MRTFSGKRSTLALAIAGVTAMSGFMAMPEARA), serve as a signal peptide directing secretion.

It belongs to the outer membrane porin (Opr) (TC 1.B.25) family.

Its subcellular location is the cell outer membrane. Its function is as follows. Involved in the uptake of chitosugars. The chain is Chitoporin (chiP) from Escherichia coli (strain K12).